The primary structure comprises 196 residues: MINFFRKKRKIVLDTSVFINPDIRNFFGENPEKAIEEFIKIAKRAKNLEFYIPSTVFKELMYFVDEKKIPKDFYFLIRIKSPDKHRSVCPAIFFYELVEEMRQRINKGLRVAENAVRNVNQKDADEIIKDLRKKYREALREGIIDSKEDVDLIFLSMELQATLITGDQGLIKWADKLGIEWIVPEKFKDFLLSAIG.

The protein belongs to the HARP family.

The enzyme catalyses Endonucleolytic cleavage of RNA, removing 5'-extranucleotides from tRNA precursor.. RNA-free RNase P that catalyzes the removal of the 5'-leader sequence from pre-tRNA to produce the mature 5'-terminus. In Thermodesulfovibrio yellowstonii (strain ATCC 51303 / DSM 11347 / YP87), this protein is RNA-free ribonuclease P.